A 261-amino-acid chain; its full sequence is Small ribosomal subunit protein uS2 (261 aa).

Residues 222-261 (GKALREQDGEANEEQPISEEEKKEVLEEAMSEEDFEGDKE) form a disordered region. Acidic residues-rich tracts occupy residues 230–239 (GEANEEQPIS) and 248–261 (EEAM…GDKE).

Belongs to the universal ribosomal protein uS2 family.

The polypeptide is Small ribosomal subunit protein uS2 (Campylobacter lari (strain RM2100 / D67 / ATCC BAA-1060)).